The following is a 186-amino-acid chain: Ribosome-recycling factor (186 aa).

Belongs to the RRF family.

It is found in the cytoplasm. Functionally, responsible for the release of ribosomes from messenger RNA at the termination of protein biosynthesis. May increase the efficiency of translation by recycling ribosomes from one round of translation to another. In Bordetella avium (strain 197N), this protein is Ribosome-recycling factor.